We begin with the raw amino-acid sequence, 89 residues long: Small ribosomal subunit protein uS15 (89 aa).

Belongs to the universal ribosomal protein uS15 family. Part of the 30S ribosomal subunit. Forms a bridge to the 50S subunit in the 70S ribosome, contacting the 23S rRNA.

One of the primary rRNA binding proteins, it binds directly to 16S rRNA where it helps nucleate assembly of the platform of the 30S subunit by binding and bridging several RNA helices of the 16S rRNA. In terms of biological role, forms an intersubunit bridge (bridge B4) with the 23S rRNA of the 50S subunit in the ribosome. In Bacteroides fragilis (strain ATCC 25285 / DSM 2151 / CCUG 4856 / JCM 11019 / LMG 10263 / NCTC 9343 / Onslow / VPI 2553 / EN-2), this protein is Small ribosomal subunit protein uS15.